The chain runs to 427 residues: Methylthioribose kinase 2 (427 aa).

ATP is bound by residues 49-53, K68, and 122-124; these read DGNLN and RYI. A substrate-binding site is contributed by N51. D243 provides a ligand contact to substrate. 260–262 is an ATP binding site; it reads DPE. R370 is a substrate binding site.

This sequence belongs to the methylthioribose kinase family. Homodimer.

The catalysed reaction is 5-(methylsulfanyl)-D-ribose + ATP = 5-(methylsulfanyl)-alpha-D-ribose 1-phosphate + ADP + H(+). It participates in amino-acid biosynthesis; L-methionine biosynthesis via salvage pathway; S-methyl-5-thio-alpha-D-ribose 1-phosphate from S-methyl-5'-thioadenosine (hydrolase route): step 2/2. In terms of biological role, catalyzes the phosphorylation of methylthioribose into methylthioribose-1-phosphate. This chain is Methylthioribose kinase 2 (MTK2), found in Oryza sativa subsp. japonica (Rice).